Consider the following 134-residue polypeptide: ATP synthase epsilon chain (134 aa).

The protein belongs to the ATPase epsilon chain family. In terms of assembly, F-type ATPases have 2 components, CF(1) - the catalytic core - and CF(0) - the membrane proton channel. CF(1) has five subunits: alpha(3), beta(3), gamma(1), delta(1), epsilon(1). CF(0) has three main subunits: a, b and c.

The protein resides in the cell inner membrane. Produces ATP from ADP in the presence of a proton gradient across the membrane. The polypeptide is ATP synthase epsilon chain (Nitratidesulfovibrio vulgaris (strain DSM 19637 / Miyazaki F) (Desulfovibrio vulgaris)).